Reading from the N-terminus, the 344-residue chain is L-lactate dehydrogenase B (344 aa).

Residues 62 to 67 and Arg-109 each bind NAD(+); that span reads DALPDK. 3 residues coordinate substrate: Arg-116, Asn-148, and Arg-179. Asn-148 is a binding site for NAD(+). His-203 functions as the Proton acceptor in the catalytic mechanism. Substrate is bound at residue Thr-258.

Belongs to the LDH/MDH superfamily. LDH family. In terms of assembly, tetramer that arise from random association of LDH-A and LDH-B.

It catalyses the reaction (S)-lactate + NAD(+) = pyruvate + NADH + H(+). Its pathway is fermentation; pyruvate fermentation to lactate; (S)-lactate from pyruvate: step 1/1. The polypeptide is L-lactate dehydrogenase B (Hordeum vulgare (Barley)).